Here is a 4076-residue protein sequence, read N- to C-terminus: E3 ubiquitin-protein ligase TOM1-like (4076 aa).

Low complexity predominate over residues 225-237 (SSAAPAVSAGSTA). 17 disordered regions span residues 225–256 (SSAA…KNVA), 288–360 (YPDT…RDGP), 748–819 (IPAE…ILPS), 921–970 (LEAP…NKPA), 1083–1103 (SPVQ…SSGT), 1571–1646 (MALD…ITRE), 1988–2041 (PADA…KRPI), 2067–2110 (NVPA…KLAK), 2275–2295 (EGDK…IGRS), 2356–2551 (SGTA…ELDY), 2581–2634 (GDDL…LLAP), 2782–2817 (IPIP…ESTH), 2858–2955 (EKAR…QAED), 3037–3066 (EQHE…ASIL), 3105–3132 (RQLH…GAGT), 3216–3241 (KQLK…NNNG), and 3353–3444 (EEQA…QLTP). Residues 238 to 250 (KAKDKEKEKEKAT) show a composition bias toward basic and acidic residues. Positions 311-320 (TTSSPAAPTP) are enriched in low complexity. Over residues 322–343 (RRSSTMNVSQSSRTQRVGSSEE) the composition is skewed to polar residues. Acidic residues predominate over residues 767-778 (EGNDADDDSEDD). A compositionally biased stretch (basic and acidic residues) spans 940-950 (VKGKGKEKATD). Residues 959 to 969 (ASSSSSGNNKP) show a composition bias toward polar residues. Positions 1606 to 1620 (PGTSRETNVGASTTA) are enriched in polar residues. The segment covering 1621 to 1632 (PQQLPVLPSQQP) has biased composition (low complexity). Residues 1633-1642 (ATESQSNTPR) show a composition bias toward polar residues. Basic and acidic residues predominate over residues 2021-2041 (VTDKDMHDAPKNPAQDLKRPI). A compositionally biased stretch (polar residues) spans 2086-2096 (NEATPSPSGDE). The segment covering 2099–2110 (SESKEKEKKLAK) has biased composition (basic and acidic residues). Acidic residues-rich tracts occupy residues 2378-2387 (DLTDDREETP) and 2405-2450 (EFSD…DLGE). The segment covering 2460–2469 (QPGVVEVLMG) has biased composition (low complexity). Acidic residues-rich tracts occupy residues 2470 to 2516 (ENDD…DLED) and 2523 to 2551 (EEGN…ELDY). Over residues 2587–2597 (EPIRDFDGHYI) the composition is skewed to basic and acidic residues. Residues 2598-2622 (DDDEDGEEDDDEDEGEDDMDDDMYF) are compositionally biased toward acidic residues. Basic and acidic residues-rich tracts occupy residues 2788–2803 (HSRE…DTYQ) and 2858–2912 (EKAR…ERAE). Residues 2851-2929 (AIQAEKEEKA…QAAADQEANA (79 aa)) are a coiled coil. The segment covering 2913–2927 (AAAQAAAQAAADQEA) has biased composition (low complexity). The span at 3037 to 3047 (EQHEQRRRERQ) shows a compositional bias: basic and acidic residues. Residues 3108–3117 (HAQQGGQAAS) show a composition bias toward polar residues. Residues 3341 to 3375 (PLQAIERRRKEAEEQAKKKKEAEEKAATEREAANA) are a coiled coil. Residues 3353–3372 (EEQAKKKKEAEEKAATEREA) are compositionally biased toward basic and acidic residues. Over residues 3373–3414 (ANAPEEQASTSTEQTPAQQEATQQPSESTPAAASGQQPAQQD) the composition is skewed to low complexity. Positions 3415–3439 (QENKELEAPKEKADEKDVQSDEKKI) are enriched in basic and acidic residues. The HECT domain maps to 3740-4076 (KADELKFGKL…TAGSDYFGFA (337 aa)). The active-site Glycyl thioester intermediate is the cysteine 4043.

It belongs to the UPL family. TOM1/PTR1 subfamily.

It is found in the nucleus. The catalysed reaction is S-ubiquitinyl-[E2 ubiquitin-conjugating enzyme]-L-cysteine + [acceptor protein]-L-lysine = [E2 ubiquitin-conjugating enzyme]-L-cysteine + N(6)-ubiquitinyl-[acceptor protein]-L-lysine.. It functions in the pathway protein modification; protein ubiquitination. Probable ubiquitin ligase protein, which may be involved in mRNA export. E3 ubiquitin ligase proteins mediate ubiquitination and subsequent proteasomal degradation of target proteins. Participates in mRNA export from the nucleus by regulating the transport of hnRNP proteins. The chain is E3 ubiquitin-protein ligase TOM1-like from Neurospora crassa (strain ATCC 24698 / 74-OR23-1A / CBS 708.71 / DSM 1257 / FGSC 987).